A 534-amino-acid chain; its full sequence is Autophagic-related protein 16.2 (534 aa).

WD repeat units lie at residues 243–281, 288–329, 330–368, 371–411, 413–452, 459–498, and 504–534; these read THDGEVHDVEWMSDDTFATAGSDSKVQIWRVSPNKTDAS, GCLG…STFS, GHTDKVSSARLFQSHNVISGSADRTIKNWDISSIRCLKS, VGST…ATYS, ELGQKVSSLDISMDGLQVLASSRDDTLSLIDVRNYGIIHL, KTSCDSTRAIFSSTGEYVLAGSSNSSVFIWNTKTTKLEKV, and SDSAQIMSLAWNPSGRGLLACDRQKTCTLWR.

This sequence belongs to the WD repeat tipD family. Homodimer (via N-terminus). Most likely a component of a complex at least containing atg-5, lgg-3, atg-16.1 and/or atg-16.2. Interacts (via N-terminus) with atg-16.1 (via N-terminus). Interacts (via N-terminus) with atg-5. Interacts (via WD 5-6 repeats) with lgg-2; the interaction is direct. As to expression, expressed in neurons, pharyngeal muscles, body wall muscle cells and intestinal cells.

It is found in the cytoplasm. The protein resides in the cell membrane. In terms of biological role, most likely a component of the atg-5-atg-12-atg-16.1/atg-16.2 complex, which is recruited to the preautophagosomal membrane and associates with lgg-2 to promote autophagosome formation. Plays a role in the recruitment of lipidated lgg-1 probably to the autophagosome membrane to promote autophagosome formation. Furthermore, association with atg-5 is required for the nucleation of lgg-1 positive autophagosomes. Although its role in autophagosome formation may be distinct to the role of atg-16.2, it functions in a partially redundant manner with atg-16.1 to regulate autophagic processes. In a daf-18/PTEN- and daf-16/FOXO-dependent manner, required for maintaining the numbers of germ stem cell progenitors in the gonad during the late phases of larval development. The chain is Autophagic-related protein 16.2 from Caenorhabditis elegans.